A 230-amino-acid chain; its full sequence is Dephospho-CoA kinase (230 aa).

Residues 1 to 21 (MSKYAAAPSPYSHQPQTPEHK) are disordered. The 200-residue stretch at 26–225 (VVGLTGGIGS…QDYLKLAQQL (200 aa)) folds into the DPCK domain. Residue 34–39 (GSGKSA) participates in ATP binding.

The protein belongs to the CoaE family.

It is found in the cytoplasm. The enzyme catalyses 3'-dephospho-CoA + ATP = ADP + CoA + H(+). It participates in cofactor biosynthesis; coenzyme A biosynthesis; CoA from (R)-pantothenate: step 5/5. Functionally, catalyzes the phosphorylation of the 3'-hydroxyl group of dephosphocoenzyme A to form coenzyme A. This is Dephospho-CoA kinase from Psychrobacter cryohalolentis (strain ATCC BAA-1226 / DSM 17306 / VKM B-2378 / K5).